Reading from the N-terminus, the 1042-residue chain is Serine/threonine-protein kinase LATS2 (1042 aa).

The disordered stretch occupies residues 23–44 (REGLKQPSKASTQGLLVGPNSD). A compositionally biased stretch (polar residues) spans 30–44 (SKASTQGLLVGPNSD). Ser82 is modified (phosphoserine; by AURKA). The UBA domain maps to 97–138 (EVNRQMLQELVNAGCDQEMAGRALKQTGSRSIEAALEYISKM). The tract at residues 100-140 (RQMLQELVNAGCDQEMAGRALKQTGSRSIEAALEYISKMGY) is interaction with ubiquitinated AMOTL2. A disordered region spans residues 237 to 282 (HFPGTHYGRGHLLSEQPGYGVQRSSSFQNKTPPDAYSSMAKAQGGP). A compositionally biased stretch (polar residues) spans 258-267 (QRSSSFQNKT). Residue Thr267 is modified to Phosphothreonine. Position 362 is a phosphoserine (Ser362). 3 disordered regions span residues 378 to 399 (RAGPSRTNSFNNPQPEPSLPAP), 442 to 481 (PATESLETKEGSAGPHPLDVDYGGSERRCPPPPYPKHLLL), and 501 to 550 (QSLR…KRES). Positions 472 to 475 (PPPY) match the PPxY motif motif. A compositionally biased stretch (basic and acidic residues) spans 507 to 530 (TEQDRSDKSHKGAKGDKAGRDKKQ). Ser534 is modified (phosphoserine). Over residues 541 to 550 (NSRDEEKRES) the composition is skewed to basic and acidic residues. The Protein kinase domain occupies 626–931 (FVKIKTLGIG…ADDLKAHPFF (306 aa)). ATP-binding positions include 632–640 (LGIGAFGEV) and Lys655. Residue Asp749 is the Proton acceptor of the active site. One can recognise an AGC-kinase C-terminal domain in the interval 932–1010 (NTIDFSRDIR…RRFFDDNGYP (79 aa)). Thr999 carries the post-translational modification Phosphothreonine. The tract at residues 1014-1042 (PKPSEPAESADPGDADLEGAAEGCQPVYV) is disordered.

It belongs to the protein kinase superfamily. AGC Ser/Thr protein kinase family. Interacts with and is phosphorylated by AURKA. Binds to AR. Interacts with AJUBA during mitosis and this complex regulates organization of the spindle apparatus through recruitment of gamma-tubulin to the centrosome. Interacts (via PPxY motif) with YAP1 (via WW domains). Interacts with MOB1A and MOB1B. Interacts with LIMD1, WTIP and AJUBA. Interacts with SNAI1. Interacts with WWC1, WWC2 and WWC3 (via their WW domains). Interacts (via UBA domain) with ubiquitinated AMOTL2; the interaction promotes LATS2 phosphorylation of YAP1. Mg(2+) serves as cofactor. Autophosphorylated and phosphorylated during M-phase and the G1/S-phase of the cell cycle. Phosphorylated and activated by STK3/MST2. Phosphorylated by MAP4Ks; in parallel to STK3/MST2 and resulting to its activation. Phosphorylation by NUAK2 may regulate its activity in phosphorylation and inactivation YAP1. Expressed at high levels in ovary and testis and at lower levels in all other tissues examined.

Its subcellular location is the cytoplasm. The protein resides in the cytoskeleton. The protein localises to the microtubule organizing center. It is found in the centrosome. It localises to the spindle pole. Its subcellular location is the nucleus. It carries out the reaction L-seryl-[protein] + ATP = O-phospho-L-seryl-[protein] + ADP + H(+). The catalysed reaction is L-threonyl-[protein] + ATP = O-phospho-L-threonyl-[protein] + ADP + H(+). In terms of biological role, negative regulator of YAP1 in the Hippo signaling pathway that plays a pivotal role in organ size control and tumor suppression by restricting proliferation and promoting apoptosis. The core of this pathway is composed of a kinase cascade wherein STK3/MST2 and STK4/MST1, in complex with its regulatory protein SAV1, phosphorylates and activates LATS1/2 in complex with its regulatory protein MOB1, which in turn phosphorylates and inactivates YAP1 oncoprotein and WWTR1/TAZ. Phosphorylation of YAP1 by LATS2 inhibits its translocation into the nucleus to regulate cellular genes important for cell proliferation, cell death, and cell migration. Also phosphorylates YAP1 in response to cell contact inhibition-driven WWP1 ubiquitination of AMOTL2, which results in LATS2 activation. Acts as a tumor suppressor which plays a critical role in centrosome duplication, maintenance of mitotic fidelity and genomic stability. Negatively regulates G1/S transition by down-regulating cyclin E/CDK2 kinase activity. Negative regulator of the androgen receptor. Phosphorylates SNAI1 in the nucleus leading to its nuclear retention and stabilization, which enhances its epithelial-mesenchymal transition and tumor cell invasion/migration activities. This tumor-promoting activity is independent of its effects upon YAP1 or WWTR1/TAZ. Acts as an activator of the NLRP3 inflammasome by mediating phosphorylation of 'Ser-265' of NLRP3 following NLRP3 palmitoylation, promoting NLRP3 activation by NEK7. The polypeptide is Serine/threonine-protein kinase LATS2 (Mus musculus (Mouse)).